A 293-amino-acid polypeptide reads, in one-letter code: NAD kinase (293 aa).

D74 (proton acceptor) is an active-site residue. Residues 74-75, 148-149, H159, R176, D178, T186, 189-194, and Q248 contribute to the NAD(+) site; these read DG, NE, and TAYSLS.

The protein belongs to the NAD kinase family. Homodimer. The cofactor is a divalent metal cation.

The protein localises to the cytoplasm. The catalysed reaction is NAD(+) + ATP = ADP + NADP(+) + H(+). Its function is as follows. Involved in the regulation of the intracellular balance of NAD and NADP, and is a key enzyme in the biosynthesis of NADP. Catalyzes specifically the phosphorylation on 2'-hydroxyl of the adenosine moiety of NAD to yield NADP. The chain is NAD kinase from Yersinia pestis.